A 151-amino-acid polypeptide reads, in one-letter code: Arginine repressor (151 aa).

Belongs to the ArgR family.

It is found in the cytoplasm. It participates in amino-acid biosynthesis; L-arginine biosynthesis [regulation]. Its function is as follows. Regulates arginine biosynthesis genes. The chain is Arginine repressor from Moorella thermoacetica (strain ATCC 39073 / JCM 9320).